Reading from the N-terminus, the 91-residue chain is MTRMVNCVKLGREAEGLAFQPVPGDLGKKIFENVSKEAWAGWQRHQTMLINENRLNLADPQARSYLMEQMERYFFGGGNVDAAAGYVPPTR.

This sequence belongs to the Fe(2+)-trafficking protein family.

Its function is as follows. Could be a mediator in iron transactions between iron acquisition and iron-requiring processes, such as synthesis and/or repair of Fe-S clusters in biosynthetic enzymes. The protein is Probable Fe(2+)-trafficking protein of Thiobacillus denitrificans (strain ATCC 25259 / T1).